Reading from the N-terminus, the 193-residue chain is 21 kDa protein (193 aa).

A signal peptide spans 1-22 (MKLSKSTLVFSALLVILAAASA).

In Daucus carota (Wild carrot), this protein is 21 kDa protein.